We begin with the raw amino-acid sequence, 148 residues long: SsrA-binding protein (148 aa).

Residues 127 to 142 (KRESEKERDWERDKAR) are compositionally biased toward basic and acidic residues. Positions 127–148 (KRESEKERDWERDKARLMRVKT) are disordered.

This sequence belongs to the SmpB family.

Its subcellular location is the cytoplasm. In terms of biological role, required for rescue of stalled ribosomes mediated by trans-translation. Binds to transfer-messenger RNA (tmRNA), required for stable association of tmRNA with ribosomes. tmRNA and SmpB together mimic tRNA shape, replacing the anticodon stem-loop with SmpB. tmRNA is encoded by the ssrA gene; the 2 termini fold to resemble tRNA(Ala) and it encodes a 'tag peptide', a short internal open reading frame. During trans-translation Ala-aminoacylated tmRNA acts like a tRNA, entering the A-site of stalled ribosomes, displacing the stalled mRNA. The ribosome then switches to translate the ORF on the tmRNA; the nascent peptide is terminated with the 'tag peptide' encoded by the tmRNA and targeted for degradation. The ribosome is freed to recommence translation, which seems to be the essential function of trans-translation. The sequence is that of SsrA-binding protein from Aromatoleum aromaticum (strain DSM 19018 / LMG 30748 / EbN1) (Azoarcus sp. (strain EbN1)).